Reading from the N-terminus, the 291-residue chain is Proteasome subunit beta (291 aa).

The propeptide at 1 to 57 (MTWPLPDRLSINSLSGTPAVDLSSFTDFLRRQAPELLPASISGGAPLAGGDAQLPHG) is removed in mature form; by autocatalysis. The active-site Nucleophile is threonine 58.

It belongs to the peptidase T1B family. The 20S proteasome core is composed of 14 alpha and 14 beta subunits that assemble into four stacked heptameric rings, resulting in a barrel-shaped structure. The two inner rings, each composed of seven catalytic beta subunits, are sandwiched by two outer rings, each composed of seven alpha subunits. The catalytic chamber with the active sites is on the inside of the barrel. Has a gated structure, the ends of the cylinder being occluded by the N-termini of the alpha-subunits. Is capped by the proteasome-associated ATPase, ARC.

It localises to the cytoplasm. It carries out the reaction Cleavage of peptide bonds with very broad specificity.. It functions in the pathway protein degradation; proteasomal Pup-dependent pathway. The formation of the proteasomal ATPase ARC-20S proteasome complex, likely via the docking of the C-termini of ARC into the intersubunit pockets in the alpha-rings, may trigger opening of the gate for substrate entry. Interconversion between the open-gate and close-gate conformations leads to a dynamic regulation of the 20S proteasome proteolysis activity. Functionally, component of the proteasome core, a large protease complex with broad specificity involved in protein degradation. The chain is Proteasome subunit beta from Mycobacterium tuberculosis (strain ATCC 25177 / H37Ra).